The primary structure comprises 373 residues: Chaperone protein DnaJ (373 aa).

In terms of domain architecture, J spans 4–69; the sequence is SYYEILEITQ…EKRAIYDRYG (66 aa). The CR-type zinc finger occupies 135–212; it reads GCKKNIDFTY…CKGLGYNESK (78 aa). 8 residues coordinate Zn(2+): C148, C151, C164, C167, C186, C189, C200, and C203. CXXCXGXG motif repeat units lie at residues 148 to 155, 164 to 171, 186 to 193, and 200 to 207; these read CKTCNGTG, CPKCQGRG, CPDCQGIG, and CSDCKGLG.

It belongs to the DnaJ family. Homodimer. It depends on Zn(2+) as a cofactor.

Its subcellular location is the cytoplasm. Functionally, participates actively in the response to hyperosmotic and heat shock by preventing the aggregation of stress-denatured proteins and by disaggregating proteins, also in an autonomous, DnaK-independent fashion. Unfolded proteins bind initially to DnaJ; upon interaction with the DnaJ-bound protein, DnaK hydrolyzes its bound ATP, resulting in the formation of a stable complex. GrpE releases ADP from DnaK; ATP binding to DnaK triggers the release of the substrate protein, thus completing the reaction cycle. Several rounds of ATP-dependent interactions between DnaJ, DnaK and GrpE are required for fully efficient folding. Also involved, together with DnaK and GrpE, in the DNA replication of plasmids through activation of initiation proteins. This is Chaperone protein DnaJ from Campylobacter jejuni subsp. jejuni serotype O:2 (strain ATCC 700819 / NCTC 11168).